The chain runs to 190 residues: Imidazoleglycerol-phosphate dehydratase (190 aa).

Belongs to the imidazoleglycerol-phosphate dehydratase family.

It localises to the cytoplasm. The catalysed reaction is D-erythro-1-(imidazol-4-yl)glycerol 3-phosphate = 3-(imidazol-4-yl)-2-oxopropyl phosphate + H2O. It participates in amino-acid biosynthesis; L-histidine biosynthesis; L-histidine from 5-phospho-alpha-D-ribose 1-diphosphate: step 6/9. The protein is Imidazoleglycerol-phosphate dehydratase of Sulfurimonas denitrificans (strain ATCC 33889 / DSM 1251) (Thiomicrospira denitrificans (strain ATCC 33889 / DSM 1251)).